Reading from the N-terminus, the 308-residue chain is Ribosomal RNA small subunit methyltransferase H (308 aa).

S-adenosyl-L-methionine contacts are provided by residues 33–35, Asp-52, Tyr-81, Asp-99, and Gln-106; that span reads GGH.

It belongs to the methyltransferase superfamily. RsmH family.

The protein resides in the cytoplasm. The enzyme catalyses cytidine(1402) in 16S rRNA + S-adenosyl-L-methionine = N(4)-methylcytidine(1402) in 16S rRNA + S-adenosyl-L-homocysteine + H(+). Its function is as follows. Specifically methylates the N4 position of cytidine in position 1402 (C1402) of 16S rRNA. This chain is Ribosomal RNA small subunit methyltransferase H, found in Francisella philomiragia subsp. philomiragia (strain ATCC 25017 / CCUG 19701 / FSC 153 / O#319-036).